Consider the following 479-residue polypeptide: Glutamate--tRNA ligase (479 aa).

Positions 9–19 (PSPTGLFHIGT) match the 'HIGH' region motif. Residues 248-252 (KLSKR) carry the 'KMSKS' region motif. Lys-251 is a binding site for ATP.

It belongs to the class-I aminoacyl-tRNA synthetase family. Glutamate--tRNA ligase type 1 subfamily. As to quaternary structure, monomer.

The protein resides in the cytoplasm. The enzyme catalyses tRNA(Glu) + L-glutamate + ATP = L-glutamyl-tRNA(Glu) + AMP + diphosphate. Catalyzes the attachment of glutamate to tRNA(Glu) in a two-step reaction: glutamate is first activated by ATP to form Glu-AMP and then transferred to the acceptor end of tRNA(Glu). This is Glutamate--tRNA ligase from Prochlorococcus marinus (strain MIT 9312).